The chain runs to 419 residues: tRNA modification GTPase MnmE (419 aa).

(6S)-5-formyl-5,6,7,8-tetrahydrofolate-binding residues include R20, E76, and R115. The region spanning G211–R348 is the TrmE-type G domain. Residue N221 coordinates K(+). Residues N221 to T226, S240 to T246, and D265 to G268 contribute to the GTP site. S225 contributes to the Mg(2+) binding site. 3 residues coordinate K(+): S240, I242, and T245. T246 lines the Mg(2+) pocket. K419 is a binding site for (6S)-5-formyl-5,6,7,8-tetrahydrofolate.

Belongs to the TRAFAC class TrmE-Era-EngA-EngB-Septin-like GTPase superfamily. TrmE GTPase family. As to quaternary structure, homodimer. Heterotetramer of two MnmE and two MnmG subunits. It depends on K(+) as a cofactor.

It localises to the cytoplasm. Exhibits a very high intrinsic GTPase hydrolysis rate. Involved in the addition of a carboxymethylaminomethyl (cmnm) group at the wobble position (U34) of certain tRNAs, forming tRNA-cmnm(5)s(2)U34. This Paracoccus denitrificans (strain Pd 1222) protein is tRNA modification GTPase MnmE.